Reading from the N-terminus, the 434-residue chain is Acyl transferase 15 (434 aa).

Residues H164 and D371 each act as proton acceptor in the active site.

This sequence belongs to the plant acyltransferase family.

Functionally, involved in the incorporation of ferulate into the cell wall. This is Acyl transferase 15 from Oryza sativa subsp. japonica (Rice).